The following is a 1279-amino-acid chain: Photoreceptor cilium actin regulator (1279 aa).

The N-myristoyl glycine moiety is linked to residue Gly-2. A lipid anchor (S-palmitoyl cysteine) is attached at Cys-3. 5 disordered regions span residues 101–168, 380–598, 802–821, 860–1107, and 1127–1279; these read NKPQ…KGRV, AAQV…SHVE, EVSE…ENLP, ASHP…TTAK, and KSSS…KEIS. The span at 126–168 shows a compositional bias: basic and acidic residues; sequence FSGKESKENTPQETSKGNRESVCHQPDSQDHCRQSATESKGRV. Over residues 477–491 the composition is skewed to acidic residues; that stretch reads SEEEDCSPEEEDELS. Composition is skewed to basic and acidic residues over residues 535 to 547 and 580 to 598; these read LKMK…RIKF and GPER…SHVE. Over residues 804–818 the composition is skewed to acidic residues; it reads SESEDISGDVEEDLE. 3 stretches are compositionally biased toward polar residues: residues 886–901, 913–925, and 955–965; these read GSGS…SGST, DLNS…PSSE, and TNPTPGQSRTL. Basic and acidic residues predominate over residues 972 to 990; it reads FSRDPHSSEASRKGPERSL. Residues 1047-1062 are compositionally biased toward polar residues; sequence RKTTSPPCQHPQSNPA. Positions 1076-1090 are enriched in low complexity; the sequence is PSSASCSSPSVSPSR. Positions 1091-1100 are enriched in basic and acidic residues; the sequence is GSKDSIHSED. The segment covering 1226–1241 has biased composition (polar residues); it reads WNNSRVPELQGSSTKR. Residues 1259–1279 show a composition bias toward basic and acidic residues; that stretch reads RMNRGQDRPQPESQPQHKEIS.

Specifically expressed in retina.

Its subcellular location is the cell projection. The protein localises to the cilium. It is found in the photoreceptor outer segment. It localises to the photoreceptor inner segment. In terms of biological role, plays an essential role for normal photoreceptor cell maintenance and vision. In Mus musculus (Mouse), this protein is Photoreceptor cilium actin regulator.